The following is a 132-amino-acid chain: Small ribosomal subunit protein uS8 (132 aa).

This sequence belongs to the universal ribosomal protein uS8 family. Part of the 30S ribosomal subunit. Contacts proteins S5 and S12.

Functionally, one of the primary rRNA binding proteins, it binds directly to 16S rRNA central domain where it helps coordinate assembly of the platform of the 30S subunit. This Staphylococcus aureus (strain USA300) protein is Small ribosomal subunit protein uS8.